The sequence spans 301 residues: Polyamine aminopropyltransferase (301 aa).

The region spanning 4–240 is the PABS domain; the sequence is WHWLLEWQTP…GLWGFVYGGV (237 aa). Glutamine 33 provides a ligand contact to S-methyl-5'-thioadenosine. Spermidine-binding residues include histidine 64 and glutamate 89. S-methyl-5'-thioadenosine is bound by residues aspartate 109 and 141–142; that span reads DG. The active-site Proton acceptor is the aspartate 159.

It belongs to the spermidine/spermine synthase family. As to quaternary structure, homodimer or homotetramer.

It is found in the cytoplasm. The catalysed reaction is S-adenosyl 3-(methylsulfanyl)propylamine + putrescine = S-methyl-5'-thioadenosine + spermidine + H(+). It functions in the pathway amine and polyamine biosynthesis; spermidine biosynthesis; spermidine from putrescine: step 1/1. Functionally, catalyzes the irreversible transfer of a propylamine group from the amino donor S-adenosylmethioninamine (decarboxy-AdoMet) to putrescine (1,4-diaminobutane) to yield spermidine. The chain is Polyamine aminopropyltransferase from Saccharolobus islandicus (strain L.S.2.15 / Lassen #1) (Sulfolobus islandicus).